The sequence spans 354 residues: Uroporphyrinogen decarboxylase (354 aa).

Substrate-binding positions include 27 to 31 (RQAGR), F46, D77, Y153, T208, and H326.

Belongs to the uroporphyrinogen decarboxylase family. As to quaternary structure, homodimer.

It localises to the cytoplasm. It carries out the reaction uroporphyrinogen III + 4 H(+) = coproporphyrinogen III + 4 CO2. Its pathway is porphyrin-containing compound metabolism; protoporphyrin-IX biosynthesis; coproporphyrinogen-III from 5-aminolevulinate: step 4/4. Functionally, catalyzes the decarboxylation of four acetate groups of uroporphyrinogen-III to yield coproporphyrinogen-III. The polypeptide is Uroporphyrinogen decarboxylase (Neisseria meningitidis serogroup B (strain ATCC BAA-335 / MC58)).